We begin with the raw amino-acid sequence, 617 residues long: Glutamyl-tRNA(Gln) amidotransferase subunit E (617 aa).

Belongs to the GatB/GatE family. GatE subfamily. In terms of assembly, heterodimer of GatD and GatE.

The enzyme catalyses L-glutamyl-tRNA(Gln) + L-glutamine + ATP + H2O = L-glutaminyl-tRNA(Gln) + L-glutamate + ADP + phosphate + H(+). Functionally, allows the formation of correctly charged Gln-tRNA(Gln) through the transamidation of misacylated Glu-tRNA(Gln) in organisms which lack glutaminyl-tRNA synthetase. The reaction takes place in the presence of glutamine and ATP through an activated gamma-phospho-Glu-tRNA(Gln). The GatDE system is specific for glutamate and does not act on aspartate. The sequence is that of Glutamyl-tRNA(Gln) amidotransferase subunit E from Natronomonas pharaonis (strain ATCC 35678 / DSM 2160 / CIP 103997 / JCM 8858 / NBRC 14720 / NCIMB 2260 / Gabara) (Halobacterium pharaonis).